The sequence spans 393 residues: Major outer membrane porin, serovar E (393 aa).

Residues 1-22 (MKKLLKSVLVFAALSSASSLQA) form the signal peptide.

The protein belongs to the chlamydial porin (CP) (TC 1.B.2) family. In terms of assembly, part of a disulfide cross-linked outer membrane complex (COMC) composed of the major outer membrane porin (MOMP), the small cysteine-rich protein (OmcA) and the large cysteine-rich periplasmic protein (OmcB).

The protein localises to the cell outer membrane. Functionally, in elementary bodies (EBs, the infectious stage, which is able to survive outside the host cell) provides the structural integrity of the outer envelope through disulfide cross-links with the small cysteine-rich protein and the large cysteine-rich periplasmic protein. It has been described in publications as the Sarkosyl-insoluble COMC (Chlamydia outer membrane complex), and serves as the functional equivalent of peptidoglycan. Its function is as follows. Permits diffusion of specific solutes through the outer membrane. In Chlamydia trachomatis, this protein is Major outer membrane porin, serovar E (ompA).